The chain runs to 310 residues: ER-derived vesicles protein ERV29 (310 aa).

The Cytoplasmic portion of the chain corresponds to Met-1–Tyr-108. Residues Gly-11–Asn-31 are disordered. Residues Phe-109–Leu-129 form a helical membrane-spanning segment. Over Val-130–Tyr-137 the chain is Lumenal. Residues Ala-138–Gly-158 traverse the membrane as a helical segment. Topologically, residues Ser-159–Arg-209 are cytoplasmic. Residues Ile-210–Leu-230 traverse the membrane as a helical segment. Over Thr-231–Lys-245 the chain is Lumenal. The chain crosses the membrane as a helical span at residues Phe-246–Trp-266. Over Phe-267–Tyr-310 the chain is Cytoplasmic. The Di-lysine motif signature appears at Lys-307 to Tyr-310.

The protein belongs to the SURF4 family.

The protein localises to the endoplasmic reticulum membrane. Functionally, constituent of COPII-coated endoplasmic reticulum-derived transport vesicles. Required for efficient transport of a subset of secretory proteins to the Golgi. The C-terminal di-lysine motif is required for exit from the endoplasmic reticulum. Required directly for packaging glycosylated pro-alpha-factor into COPII vesicles. Facilitates retrograde transport from the Golgi to the endoplasmic reticulum. The protein is ER-derived vesicles protein ERV29 (ERV29) of Saccharomyces cerevisiae (strain ATCC 204508 / S288c) (Baker's yeast).